Consider the following 352-residue polypeptide: Glutamine synthetase (352 aa).

The region spanning 3–82 (YQAEYIWIDG…LCEVQLTDFT (80 aa)) is the GS beta-grasp domain. The 266-residue stretch at 87–352 (TRAAALGVAE…TTPAPAEASV (266 aa)) folds into the GS catalytic domain. Mg(2+)-binding residues include Glu108 and Glu110. Glu164 contributes to the ATP binding site. Residues Glu169 and Glu176 each coordinate Mg(2+). Glu272 lines the L-glutamate pocket.

This sequence belongs to the glutamine synthetase family. In terms of assembly, homooctamer and homotetramer. Requires Mg(2+) as cofactor.

The protein localises to the cytoplasm. It catalyses the reaction L-glutamate + NH4(+) + ATP = L-glutamine + ADP + phosphate + H(+). Catalyzes the ATP-dependent biosynthesis of glutamine from glutamate and ammonia. This chain is Glutamine synthetase, found in Frankia alni.